Here is a 605-residue protein sequence, read N- to C-terminus: MAGLYSLGVSVFSDQGGRKYMEDVTQIVVEPEPTAEEKPSPRRSLSQPLPPRPSPAALPGGEVSGKGPAVAAREARDPLPDAGASPAPSRCCRRRSSVAFFAVCDGHGGREAAQFAREHLWGFIKKQKGFTSSEPAKVCAAIRKGFLACHLAMWKKLAEWPKTMTGLPSTSGTTASVVIIRGMKMYVAHVGDSGVVLGIQDDPKDDFVRAVEVTQDHKPELPKERERIEGLGGSVMNKSGVNRVVWKRPRLTHNGPVRRSTVIDQIPFLAVARALGDLWSYDFFSGEFVVSPEPDTSVHTLDPQKHKYIILGSDGLWNMIPPQDAISMCQDQEEKKYLMGEHGQSCAKMLVNRALGRWRQRMLRADNTSAIVICISPEVDNQGNFTNEDELYLNLTDSPSYNSQETCVMTPSPCSTPPVKSLEEDPWPRVNSKDHIPALVRSNAFSENFLEVSAEIARENVQGVVIPSKDPEPLEENCAKALTLRIHDSLNNSLPIGLVPTNSTNTVMDQKNLKMSTPGQMKAQEIERTPPTNFKRTLEESNSGPLMKKHRRNGLSRSSGAQPASLPTTSQRKNSVKLTMRRRLRGQKKIGNPLLHQHRKTVCVC.

The tract at residues M1 to F101 is interaction with CHEK1. Residues G8–I375 form the PPM-type phosphatase domain. Residues V28–R90 form a disordered region. Phosphoserine occurs at positions 40 and 85. Mn(2+) contacts are provided by D105, G106, D314, and D366. The tract at residues S516–G591 is disordered. Polar residues-rich tracts occupy residues P530–G544 and L555–K577. Basic residues predominate over residues T579–K588.

The protein belongs to the PP2C family. Interacts with CHEK1 and CHEK2; dephosphorylates them. Interacts with MAPK14. It depends on Mg(2+) as a cofactor. Requires Mn(2+) as cofactor. Expressed in fetal and adult brain. Also detected in fetal liver and skeletal muscle, but not in their adult counterparts.

Its subcellular location is the nucleus. It localises to the cytoplasm. The protein resides in the cytosol. It catalyses the reaction O-phospho-L-seryl-[protein] + H2O = L-seryl-[protein] + phosphate. The catalysed reaction is O-phospho-L-threonyl-[protein] + H2O = L-threonyl-[protein] + phosphate. Involved in the negative regulation of p53 expression. Required for the relief of p53-dependent checkpoint mediated cell cycle arrest. Binds to and dephosphorylates 'Ser-15' of TP53 and 'Ser-345' of CHEK1 which contributes to the functional inactivation of these proteins. Mediates MAPK14 dephosphorylation and inactivation. Is also an important regulator of global heterochromatin silencing and critical in maintaining genome integrity. This chain is Protein phosphatase 1D (PPM1D), found in Homo sapiens (Human).